The following is a 115-amino-acid chain: UPF0738 protein SH1953 (115 aa).

Belongs to the UPF0738 family.

In Staphylococcus haemolyticus (strain JCSC1435), this protein is UPF0738 protein SH1953.